The following is a 327-amino-acid chain: Beta-1,4-galactosyltransferase 7 (327 aa).

The Cytoplasmic portion of the chain corresponds to 1-30; sequence MLPSRRKAAQLPWEDGRARLLPGGLRRKCS. Residues 31–51 form a helical; Signal-anchor for type II membrane protein membrane-spanning segment; sequence IFHLFIAFLLLVFFSLLWLQL. The Lumenal segment spans residues 52–327; that stretch reads SCSGDMAQVT…KTATPWCIFG (276 aa). The segment at 61–88 is disordered; that stretch reads TRGQGQETSGPPRACPPEPPPEHWEEDE. Residues 100 to 104 and 139 to 141 contribute to the UDP-alpha-D-galactose site; these read PFRER and FNR. The N-linked (GlcNAc...) asparagine glycan is linked to N154. Residues 164 to 165, Y194, and W224 contribute to the UDP-alpha-D-galactose site; that span reads VD. A Mn(2+)-binding site is contributed by D165. 226 to 229 serves as a coordination point for N-acetyl-D-glucosamine; the sequence is REDD. H257 provides a ligand contact to Mn(2+). Residues 257 to 259 and R266 each bind UDP-alpha-D-galactose; that span reads HLH.

Belongs to the glycosyltransferase 7 family. It depends on Mn(2+) as a cofactor.

The protein localises to the golgi apparatus. It localises to the golgi stack membrane. The catalysed reaction is 3-O-(beta-D-xylosyl)-L-seryl-[protein] + UDP-alpha-D-galactose = 3-O-(beta-D-galactosyl-(1-&gt;4)-beta-D-xylosyl)-L-seryl-[protein] + UDP + H(+). The protein operates within protein modification; protein glycosylation. Functionally, required for the biosynthesis of the tetrasaccharide linkage region of proteoglycans, especially for small proteoglycans in skin fibroblasts. The chain is Beta-1,4-galactosyltransferase 7 (B4galt7) from Mus musculus (Mouse).